Consider the following 78-residue polypeptide: Large ribosomal subunit protein bL28 (78 aa).

A disordered region spans residues M1 to H20.

Belongs to the bacterial ribosomal protein bL28 family.

This is Large ribosomal subunit protein bL28 from Actinobacillus pleuropneumoniae serotype 7 (strain AP76).